Consider the following 83-residue polypeptide: Three-finger toxin MALT0066C (83 aa).

An N-terminal signal peptide occupies residues 1-21 (MKTLLLTLVVVTIVCLDFGHT). 4 disulfide bridges follow: cysteine 24/cysteine 45, cysteine 38/cysteine 62, cysteine 64/cysteine 75, and cysteine 76/cysteine 81.

Belongs to the three-finger toxin family. Short-chain subfamily. Type I alpha-neurotoxin sub-subfamily. As to quaternary structure, dimer. In terms of tissue distribution, expressed by the venom gland.

It is found in the secreted. Its function is as follows. Binds to muscle nicotinic acetylcholine receptor (nAChR) and inhibit acetylcholine from binding to the receptor, thereby impairing neuromuscular transmission. This chain is Three-finger toxin MALT0066C, found in Micrurus altirostris (Uruguayan coral snake).